The primary structure comprises 296 residues: MNIQLLQVFLTTAREGSISKAALTLNYAQSNVTNKIQQLENDLQTKLFYRHSRGITLTPPGQILVSYSEKILHTIEEARAAMGESSAPSGPLRIGSMETTAAVWLPQLLAHYNNLYPNVDLNLVTGPTEQQIQAVLHYELNGAFISGPIEHPDLVQEKVLDEEMVLVTSASHPVISSIQDVQTQTMLVFRKGCSYRAKLNHILQEEGLLPIKLMEFGILEAIIGCVSAGLGISLLPRSIIASHEKEGRIRSHTISDKYSFVSTMFIRRKDTLITPALSAFLTHMRDHFQIKRPDQS.

The HTH lysR-type domain maps to 1–58 (MNIQLLQVFLTTAREGSISKAALTLNYAQSNVTNKIQQLENDLQTKLFYRHSRGITLT). The segment at residues 18–37 (ISKAALTLNYAQSNVTNKIQ) is a DNA-binding region (H-T-H motif).

The protein belongs to the LysR transcriptional regulatory family.

Positive regulator of glutamate biosynthesis (gltAB genes). Negatively regulates its own expression. This chain is HTH-type transcriptional regulator GltR (gltR), found in Bacillus subtilis (strain 168).